Here is a 294-residue protein sequence, read N- to C-terminus: ATP phosphoribosyltransferase (294 aa).

The protein belongs to the ATP phosphoribosyltransferase family. Long subfamily. It depends on Mg(2+) as a cofactor.

It is found in the cytoplasm. It catalyses the reaction 1-(5-phospho-beta-D-ribosyl)-ATP + diphosphate = 5-phospho-alpha-D-ribose 1-diphosphate + ATP. It functions in the pathway amino-acid biosynthesis; L-histidine biosynthesis; L-histidine from 5-phospho-alpha-D-ribose 1-diphosphate: step 1/9. With respect to regulation, feedback inhibited by histidine. Functionally, catalyzes the condensation of ATP and 5-phosphoribose 1-diphosphate to form N'-(5'-phosphoribosyl)-ATP (PR-ATP). Has a crucial role in the pathway because the rate of histidine biosynthesis seems to be controlled primarily by regulation of HisG enzymatic activity. This Chlorobium chlorochromatii (strain CaD3) protein is ATP phosphoribosyltransferase.